Consider the following 161-residue polypeptide: Stress response protein YvgO (161 aa).

A signal peptide spans 1–26 (MKRIRIPMTLALGAALTIAPLSFASA).

The protein is Stress response protein YvgO (yvgO) of Bacillus subtilis (strain 168).